The following is a 572-amino-acid chain: Probable inactive glycosyltransferase 25 family member 3 (572 aa).

N-linked (GlcNAc...) asparagine glycans are attached at residues Asn-52, Asn-130, Asn-214, and Asn-337. The short motif at 569–572 (RDEL) is the Prevents secretion from ER element.

It belongs to the glycosyltransferase 25 family.

The protein resides in the endoplasmic reticulum lumen. Its function is as follows. Probable cell adhesion protein involved in leukocyte transmigration across the blood-brain barrier. Does not express any beta-galactosyltransferase activity in vitro. The chain is Probable inactive glycosyltransferase 25 family member 3 (Cercam) from Rattus norvegicus (Rat).